We begin with the raw amino-acid sequence, 618 residues long: Nuclear RNA export factor 1 (618 aa).

Positions 1-15 are enriched in basic and acidic residues; sequence MADEGKSYNEHDDRV. Residues 1 to 113 are disordered; sequence MADEGKSYNE…RGGAGTSQDG (113 aa). At A2 the chain carries N-acetylalanine. Residues 2–59 are minor non-specific RNA-binding; that stretch reads ADEGKSYNEHDDRVSFPQRRKKGRGPFRWKCGVGNRRSGRGGSGIRSSRFEEDDGDVA. The interval 2-117 is RNA-binding (RBD); it reads ADEGKSYNEH…GTSQDGTTKN (116 aa). Positions 2-197 are interaction with ALYREF/THOC4 and LUZP4; it reads ADEGKSYNEH…IIINSSAPPY (196 aa). Residues 19-28 show a composition bias toward basic residues; it reads QRRKKGRGPF. Asymmetric dimethylarginine; alternate is present on R41. Omega-N-methylarginine; alternate is present on R41. The interval 60–117 is major non-specific RNA-binding; sequence MNDPQDGPRVRFNPYTTRPNRRRDTWHDRDRIHVTVRRDRAPQERGGAGTSQDGTTKN. Residues 60–117 form an RNA binding region; sequence MNDPQDGPRVRFNPYTTRPNRRRDTWHDRDRIHVTVRRDRAPQERGGAGTSQDGTTKN. Residues 66–99 carry the Nuclear localization signal motif; the sequence is GPRVRFNPYTTRPNRRRDTWHDRDRIHVTVRRDR. Residues 81 to 102 show a composition bias toward basic and acidic residues; sequence RRDTWHDRDRIHVTVRRDRAPQ. Positions 82–109 match the Nuclear export signal motif; it reads RDTWHDRDRIHVTVRRDRAPQERGGAGT. The region spanning 118–197 is the RRM domain; the sequence is WFKITIPYGK…IIINSSAPPY (80 aa). Y125 is modified (3'-nitrotyrosine). 4 LRR repeats span residues 265 to 290, 291 to 314, 315 to 342, and 343 to 370; these read ELLSLNLSNNRLYKLDDMSSIVQKAP, NLKILNLSGNELKSEWELDKIKGL, KLEELWLDRNPMCDTFLDQSTYISTIRE, and RFPKLLRLDGHELPPPIAFDVEAPTMLP. In terms of domain architecture, NTF2 spans 385–535; the sequence is LVLHFLQQYY…LCIVNDELFV (151 aa). The TAP-C domain maps to 564-618; it reads QEQQDMLQAFSTQSGMNLEWSQKCLQDNNWDYTRSAQAFTHLKAKGEIPEVAFMK.

It belongs to the NXF family. As to quaternary structure, heterodimer (via NTF2 domain) with NXT1. The formation of NXF1-NXT1 heterodimers is required for the NXF1-mediated nuclear mRNA export. Forms a complex with RANBP2/NUP358, NXT1 and RANGAP1. Associates with the exon junction complex (EJC). Associates with the transcription/export (TREX) complex. Found in a mRNA complex with UPF3A and UPF3B. Found in a post-splicing complex with RBM8A, UPF1, UPF2, UPF3A, UPF3B and RNPS1. Interacts (via N-terminus) with DHX9 (via N-terminus); this interaction is direct and negatively regulates NXF1-mediated nuclear export of constitutive transport element (CTE)-containing cellular mRNAs. Interacts with FYTTD1/UIF. Interacts with EIF4A3. Interacts with NUP42. Interacts with ALYREF/THOC4. Interacts with CHTOP. Interacts with FRG1 (via N-terminus). Interacts with LUZP4. Interacts with FMR1; the interaction occurs in a mRNA-dependent and polyribosomes-independent manner in the nucleus. Interacts with CPSF6 (via N-terminus); this interaction is direct. Interacts with RBM15. Interacts with RBM15B. Interacts with MCM3AP; this interaction is not mediated by RNA. Interacts with DDX3X (via C-terminus); this interaction may be partly involved in DDX3X nuclear export and in NXF1 localization to stress granules. Interacts with PABPC1/PABP1.

It is found in the nucleus. It localises to the nucleoplasm. Its subcellular location is the nucleus speckle. The protein localises to the nuclear pore complex. The protein resides in the nucleus envelope. It is found in the cytoplasm. It localises to the stress granule. Functionally, involved in the nuclear export of mRNA species bearing retroviral constitutive transport elements (CTE) and in the export of mRNA from the nucleus to the cytoplasm (TAP/NFX1 pathway). The NXF1-NXT1 heterodimer is involved in the export of HSP70 mRNA in conjunction with ALYREF/THOC4 and THOC5 components of the TREX complex. ALYREF/THOC4-bound mRNA is thought to be transferred to the NXF1-NXT1 heterodimer for export. Also involved in nuclear export of m6A-containing mRNAs: interaction between SRSF3 and YTHDC1 facilitates m6A-containing mRNA-binding to both SRSF3 and NXF1, promoting mRNA nuclear export. The sequence is that of Nuclear RNA export factor 1 (Nxf1) from Rattus norvegicus (Rat).